Reading from the N-terminus, the 1165-residue chain is Leptin receptor (1165 aa).

The first 21 residues, 1-21 (MICQKFCVVLLHWEFIYVITA), serve as a signal peptide directing secretion. Topologically, residues 22–839 (FNLSYPITPW…QDDIEKHQSD (818 aa)) are extracellular. 6 N-linked (GlcNAc...) asparagine glycosylation sites follow: asparagine 23, asparagine 41, asparagine 56, asparagine 73, asparagine 81, and asparagine 98. Disulfide bonds link cysteine 37/cysteine 90, cysteine 89/cysteine 99, cysteine 131/cysteine 142, cysteine 186/cysteine 196, and cysteine 188/cysteine 193. Residue asparagine 187 is glycosylated (N-linked (GlcNAc...) asparagine). N-linked (GlcNAc...) asparagine glycans are attached at residues asparagine 206, asparagine 276, asparagine 347, and asparagine 397. The region spanning 239–333 (PPLGLHMEIT…TPRVFTTQDV (95 aa)) is the Fibronectin type-III 1 domain. Positions 331 to 429 (QDVIYFPPKI…HRYAELYVID (99 aa)) constitute an Ig-like domain. 5 disulfides stabilise this stretch: cysteine 352–cysteine 412, cysteine 413–cysteine 418, cysteine 436–cysteine 447, cysteine 473–cysteine 528, and cysteine 488–cysteine 498. The tract at residues 467-484 (HRSSLYCSDIPSIHPISE) is leptin-binding. N-linked (GlcNAc...) asparagine glycans are attached at residues asparagine 516, asparagine 624, asparagine 659, asparagine 688, asparagine 697, asparagine 728, and asparagine 750. Fibronectin type-III domains are found at residues 539-634 (PPSS…TVVM), 639-732 (PMRG…LTFS), and 740-833 (IVQS…QDDI). The WSXWS motif motif lies at 622-626 (WSNWS). The helical transmembrane segment at 840–862 (AGLYVIVPVIISSSILLLGTLLI) threads the bilayer. Over 863 to 1165 (SHQRMKKLFW…MENKMCDLTV (303 aa)) the chain is Cytoplasmic. The short motif at 871–879 (FWEDVPNPK) is the Box 1 motif element. The residue at position 882 (serine 882) is a Phosphoserine. The segment at 893-898 (ETFEHL) is required for JAK2 activation. Positions 898-906 (LFIKHTASV) are required for STAT3 phosphorylation. A Phosphotyrosine; by JAK2 modification is found at tyrosine 986. Tyrosine 1079 carries the phosphotyrosine modification. Residue tyrosine 1141 is modified to Phosphotyrosine; by JAK2.

Belongs to the type I cytokine receptor family. Type 2 subfamily. Present as a mixture of monomers and dimers. The phosphorylated receptor binds a number of SH2 domain-containing proteins such as JAK2, STAT3, PTPN11, and SOCS3. Interaction with SOCS3 inhibits JAK/STAT signaling and MAPK cascade. On ligand binding, phosphorylated on two conserved C-terminal tyrosine residues (isoform B only) by JAK2. Tyr-986 is required for complete binding and activation of PTPN11, ERK/FOS activation,for interaction with SOCS3 and SOCS3 mediated inhibition of leptin signaling. Phosphorylation on Tyr-1141 is required for STAT3 binding/activation. Phosphorylation of Tyr-1079 has a more accessory role. Isoform A is expressed in fetal liver and in hematopoietic tissues and choroid plexus. In adults highest expression in heart, liver, small intestine, prostate and ovary. Low level in lung and kidney. Isoform B is highly expressed in hypothalamus, but also in skeletal muscle. Detected in fundic and antral epithelial cells of the gastric mucosa. Isoform B and isoform A are expressed by NK cells (at protein level).

Its subcellular location is the cell membrane. The protein resides in the basolateral cell membrane. It is found in the secreted. Functionally, receptor for hormone LEP/leptin. On ligand binding, mediates LEP central and peripheral effects through the activation of different signaling pathways such as JAK2/STAT3 and MAPK cascade/FOS. In the hypothalamus, LEP acts as an appetite-regulating factor that induces a decrease in food intake and an increase in energy consumption by inducing anorexinogenic factors and suppressing orexigenic neuropeptides, also regulates bone mass and secretion of hypothalamo-pituitary-adrenal hormones. In the periphery, increases basal metabolism, influences reproductive function, regulates pancreatic beta-cell function and insulin secretion, is pro-angiogenic and affects innate and adaptive immunity. Control of energy homeostasis and melanocortin production (stimulation of POMC and full repression of AgRP transcription) is mediated by STAT3 signaling, whereas distinct signals regulate NPY and the control of fertility, growth and glucose homeostasis. Involved in the regulation of counter-regulatory response to hypoglycemia by inhibiting neurons of the parabrachial nucleus. Has a specific effect on T lymphocyte responses, differentially regulating the proliferation of naive and memory T -ells. Leptin increases Th1 and suppresses Th2 cytokine production. Its function is as follows. May transport LEP across the blood-brain barrier. Binds LEP and mediates LEP endocytosis. Does not induce phosphorylation of and activate STAT3. Antagonizes Isoform A and isoform B-mediated LEP binding and endocytosis. In Homo sapiens (Human), this protein is Leptin receptor (LEPR).